A 358-amino-acid polypeptide reads, in one-letter code: Isopentenyl-diphosphate delta-isomerase (358 aa).

12–13 (RK) contacts substrate. FMN is bound by residues 69 to 71 (AMT), S99, and N128. Residue Q158 coordinates substrate. E159 is a binding site for Mg(2+). FMN is bound by residues K190, T220, 267–269 (GIR), and 288–289 (AG).

It belongs to the IPP isomerase type 2 family. In terms of assembly, homooctamer. Dimer of tetramers. FMN serves as cofactor. It depends on NADPH as a cofactor. Requires Mg(2+) as cofactor.

Its subcellular location is the cytoplasm. It catalyses the reaction isopentenyl diphosphate = dimethylallyl diphosphate. Involved in the biosynthesis of isoprenoids. Catalyzes the 1,3-allylic rearrangement of the homoallylic substrate isopentenyl (IPP) to its allylic isomer, dimethylallyl diphosphate (DMAPP). This chain is Isopentenyl-diphosphate delta-isomerase, found in Listeria monocytogenes serotype 4b (strain F2365).